Here is a 368-residue protein sequence, read N- to C-terminus: E3 ubiquitin-protein ligase makorin (368 aa).

2 consecutive C3H1-type zinc fingers follow at residues 2 to 29 (STKR…HDWN) and 30 to 57 (DQPN…HVKV). The disordered stretch occupies residues 58–81 (SRNPTVAPPPSSSTTTRASSSLQP). The span at 69–78 (SSTTTRASSS) shows a compositional bias: low complexity. The C3H1-type 3 zinc finger occupies 147 to 174 (PADLPICSFAAGGNCPYGEECPQMHGDL). Residues 175–202 (CTTCGKMCLHPYRPDEREEHTKLCEKNH) are makorin-type Cys-His. An RING-type zinc finger spans residues 216 to 274 (CSVCLDRVLSKPTAAERKFGLLSECDHPFCISCIRNWRNNSPTSGMDVNSALRACPICR). The C3H1-type 4 zinc finger occupies 303–332 (KLKSIDCKYFDFGTGTCPFGSSCFYKHAYR).

As to expression, expressed in primary roots and leaves. Detected in vascular bundle tissues.

The enzyme catalyses S-ubiquitinyl-[E2 ubiquitin-conjugating enzyme]-L-cysteine + [acceptor protein]-L-lysine = [E2 ubiquitin-conjugating enzyme]-L-cysteine + N(6)-ubiquitinyl-[acceptor protein]-L-lysine.. It functions in the pathway protein modification; protein ubiquitination. In terms of biological role, E3 ubiquitin ligase catalyzing the covalent attachment of ubiquitin moieties onto substrate proteins. This is E3 ubiquitin-protein ligase makorin (MKRN) from Oryza sativa subsp. japonica (Rice).